The sequence spans 215 residues: Large ribosomal subunit protein bL25 (215 aa).

Positions 170–215 are disordered; that stretch reads DPDTSVASVTPPTTEEDLDTDDVDENAEPELVGAENDSADEESENK. Composition is skewed to acidic residues over residues 183–197 and 206–215; these read TEED…ENAE and DSADEESENK.

It belongs to the bacterial ribosomal protein bL25 family. CTC subfamily. In terms of assembly, part of the 50S ribosomal subunit; part of the 5S rRNA/L5/L18/L25 subcomplex. Contacts the 5S rRNA. Binds to the 5S rRNA independently of L5 and L18.

Functionally, this is one of the proteins that binds to the 5S RNA in the ribosome where it forms part of the central protuberance. The chain is Large ribosomal subunit protein bL25 from Oceanobacillus iheyensis (strain DSM 14371 / CIP 107618 / JCM 11309 / KCTC 3954 / HTE831).